The chain runs to 402 residues: Indole-3-glycerol phosphate synthase, chloroplastic (402 aa).

The transit peptide at 1–65 (MEGLVPVQRL…SDLKESLAVS (65 aa)) directs the protein to the chloroplast.

It belongs to the TrpC family. As to expression, expressed in leaves.

It is found in the plastid. The protein resides in the chloroplast. It catalyses the reaction 1-(2-carboxyphenylamino)-1-deoxy-D-ribulose 5-phosphate + H(+) = (1S,2R)-1-C-(indol-3-yl)glycerol 3-phosphate + CO2 + H2O. The protein operates within amino-acid biosynthesis; L-tryptophan biosynthesis; L-tryptophan from chorismate: step 4/5. Functionally, indole-3-glycerol phosphate synthase required for tryptophan biosynthesis. This Arabidopsis thaliana (Mouse-ear cress) protein is Indole-3-glycerol phosphate synthase, chloroplastic.